The following is a 196-amino-acid chain: Small ribosomal subunit protein uS4c (196 aa).

Residues 89 to 169 enclose the S4 RNA-binding domain; sequence MRLDNIIFRL…LPKHLTIDTV (81 aa).

The protein belongs to the universal ribosomal protein uS4 family. In terms of assembly, part of the 30S ribosomal subunit. Contacts protein S5. The interaction surface between S4 and S5 is involved in control of translational fidelity.

It is found in the plastid. Its subcellular location is the chloroplast. Functionally, one of the primary rRNA binding proteins, it binds directly to 16S rRNA where it nucleates assembly of the body of the 30S subunit. Its function is as follows. With S5 and S12 plays an important role in translational accuracy. The chain is Small ribosomal subunit protein uS4c (rps4) from Stipellula capensis (Cape rice grass).